A 1854-amino-acid polypeptide reads, in one-letter code: Immunoglobulin A1 protease (1854 aa).

The signal sequence occupies residues 1 to 37 (MKKFLGEKQTRFAFRKLAVGLVSAAISSLFFVSIVGV). A propeptide spanning residues 38-99 (DSVQAQEKLN…NAGAKTLPNT (62 aa)) is cleaved from the precursor. The LPXTG sorting signal motif lies at 96–100 (LPNTG). Pentaglycyl murein peptidoglycan amidated threonine is present on Thr-99. 2 helical membrane-spanning segments follow: residues 106–125 (TMMA…FAVS) and 132–154 (KFLL…VDAL). Residues 155-1854 (ENGSLLQYNA…FRKSIFENQK (1700 aa)) are Extracellular-facing. Residues 256 to 335 (KPELLYKETS…PKIVEKGTKK (80 aa)) enclose the G5 domain. 10 tandem repeats follow at residues 349 to 368 (VQPE…SGAI), 369 to 388 (VEPE…SGAI), 389 to 406 (VEPE…SGAI), 407 to 426 (VEPE…AGAV), 427 to 446 (VSPE…SGAI), 447 to 466 (VEPA…SGAI), 467 to 486 (VKPA…SGAI), 487 to 506 (VEPE…AGAI), 507 to 526 (VEPE…AGAI), and 527 to 546 (VEPE…EPAA). The 10 X 20 AA approximate tandem repeats stretch occupies residues 349–546 (VQPEQVAPLP…EYTGNIEPAA (198 aa)). The span at 533-550 (EPPQEYTGNIEPAAPEAE) shows a compositional bias: low complexity. Residues 533-570 (EPPQEYTGNIEPAAPEAENPTEKAQEPKEQKQEPEKNI) are disordered. The span at 552-570 (PTEKAQEPKEQKQEPEKNI) shows a compositional bias: basic and acidic residues. His-1494 lines the Zn(2+) pocket. Residue Glu-1495 is part of the active site. His-1498 and Glu-1518 together coordinate Zn(2+).

The protein belongs to the peptidase M26 family. The cofactor is Zn(2+). Post-translationally, the Gram-positive cell-wall anchor motif LPXTG is located in the N-terminal part, in contrast to such motifs in other known streptococcal and staphylococcal proteins. The protease could be cleaved by the sortase and anchored in the membrane via the two potential N-terminal transmembrane domains, whereas the propeptide located prior to the LPXTG motif would remain attached to the cell wall peptidoglycan by an amide bond.

It is found in the secreted. The protein resides in the cell wall. Its subcellular location is the membrane. The enzyme catalyses Cleavage of Pro-|-Thr bond in the hinge region of the heavy chain of human IgA.. Its activity is regulated as follows. Inhibited by EDTA. In terms of biological role, zinc metalloproteinase which cleaves human immunoglobulin A1 (IgA1) in the hinge region. The protein is Immunoglobulin A1 protease (iga) of Streptococcus sanguinis.